Reading from the N-terminus, the 146-residue chain is UPF0178 protein BT9727_2823 (146 aa).

Belongs to the UPF0178 family.

The polypeptide is UPF0178 protein BT9727_2823 (Bacillus thuringiensis subsp. konkukian (strain 97-27)).